A 217-amino-acid polypeptide reads, in one-letter code: Adenylate kinase (217 aa).

Position 11–16 (11–16 (GAGKGT)) interacts with ATP. Residues 31–60 (STGDMFREAMANETPVGLEAKSYIDKGNLV) are NMP. AMP contacts are provided by residues threonine 32, arginine 37, 58–60 (NLV), 86–89 (GFPR), and glutamine 93. The LID stretch occupies residues 127–165 (ARYICKKCGATYNKISNPTKVEGTCDRCGGHEFFQREDD). Arginine 128 is an ATP binding site. 2 residues coordinate Zn(2+): cysteine 131 and cysteine 134. Residue 137–138 (TY) coordinates ATP. The Zn(2+) site is built by cysteine 151 and cysteine 154. AMP is bound by residues arginine 162 and arginine 173. Glutamine 201 contacts ATP.

Belongs to the adenylate kinase family. As to quaternary structure, monomer.

The protein localises to the cytoplasm. It catalyses the reaction AMP + ATP = 2 ADP. Its pathway is purine metabolism; AMP biosynthesis via salvage pathway; AMP from ADP: step 1/1. Its function is as follows. Catalyzes the reversible transfer of the terminal phosphate group between ATP and AMP. Plays an important role in cellular energy homeostasis and in adenine nucleotide metabolism. This chain is Adenylate kinase, found in Lactobacillus johnsonii (strain CNCM I-12250 / La1 / NCC 533).